A 372-amino-acid chain; its full sequence is Protein RecA (372 aa).

77-84 contributes to the ATP binding site; the sequence is GPESSGKT.

Belongs to the RecA family.

It localises to the cytoplasm. Functionally, can catalyze the hydrolysis of ATP in the presence of single-stranded DNA, the ATP-dependent uptake of single-stranded DNA by duplex DNA, and the ATP-dependent hybridization of homologous single-stranded DNAs. It interacts with LexA causing its activation and leading to its autocatalytic cleavage. The sequence is that of Protein RecA from Corynebacterium diphtheriae (strain ATCC 700971 / NCTC 13129 / Biotype gravis).